Reading from the N-terminus, the 190-residue chain is Putative 3-methyladenine DNA glycosylase (190 aa).

This sequence belongs to the DNA glycosylase MPG family.

The sequence is that of Putative 3-methyladenine DNA glycosylase from Rubrobacter xylanophilus (strain DSM 9941 / JCM 11954 / NBRC 16129 / PRD-1).